A 199-amino-acid chain; its full sequence is Imidazoleglycerol-phosphate dehydratase (199 aa).

It belongs to the imidazoleglycerol-phosphate dehydratase family.

The protein resides in the cytoplasm. The enzyme catalyses D-erythro-1-(imidazol-4-yl)glycerol 3-phosphate = 3-(imidazol-4-yl)-2-oxopropyl phosphate + H2O. It participates in amino-acid biosynthesis; L-histidine biosynthesis; L-histidine from 5-phospho-alpha-D-ribose 1-diphosphate: step 6/9. In Bifidobacterium longum (strain NCC 2705), this protein is Imidazoleglycerol-phosphate dehydratase.